A 902-amino-acid chain; its full sequence is Glutamate receptor 4 (902 aa).

A signal peptide spans 1–20 (MRIISRQIVLLFSGFWGLAM). Residues 22–544 (AFPSSVQIGG…GVFSFLDPLA (523 aa)) lie on the Extracellular side of the membrane. Asn52, Asn56, Asn258, Asn371, Asn407, and Asn414 each carry an N-linked (GlcNAc...) asparagine glycan. Cys84 and Cys331 form a disulfide bridge. L-glutamate is bound by residues Pro500, Thr502, and Arg507. A helical transmembrane segment spans residues 545-565 (YEIWMCIVFAYIGVSVVLFLV). Residues 566–592 (SRFSPYEWHTEEPEDGKEGPSDQPPNE) lie on the Cytoplasmic side of the membrane. An intramembrane region (helical; Pore-forming) is located at residues 593-608 (FGIFNSLWFSLGAFMQ). An intramembrane segment occupies 609–611 (QGC). A lipid anchor (S-palmitoyl cysteine) is attached at Cys611. Over 612–617 (DISPRS) the chain is Cytoplasmic. A helical transmembrane segment spans residues 618-638 (LSGRIVGGVWWFFTLIIISSY). The Extracellular portion of the chain corresponds to 639–813 (TANLAAFLTV…DKTSALSLSN (175 aa)). Ser676, Thr677, and Glu727 together coordinate L-glutamate. Cys740 and Cys795 are joined by a disulfide. A helical transmembrane segment spans residues 814–834 (VAGVFYILVGGLGLAMLVALI). Residues 835–902 (EFCYKSRAEA…GLAVIASDLP (68 aa)) lie on the Cytoplasmic side of the membrane. The S-palmitoyl cysteine moiety is linked to residue Cys837. At Ser862 the chain carries Phosphoserine; by PKC/PRKCG.

The protein belongs to the glutamate-gated ion channel (TC 1.A.10.1) family. GRIA4 subfamily. As to quaternary structure, homotetramer or heterotetramer of pore-forming glutamate receptor subunits. Tetramers may be formed by the dimerization of dimers. Interacts with EPB41L1 via its C-terminus. Isoform 3 interacts with PICK1. Found in a complex with GRIA1, GRIA2, GRIA3, CNIH2, CNIH3, CACNG2, CACNG3, CACNG4, CACNG5, CACNG7 and CACNG8. Interacts with CACNG5 and PRKCG. Found in a complex with GRIA1, GRIA2, GRIA3, DLG4, CACNG8 and CNIH2. Post-translationally, palmitoylated. Depalmitoylated upon L-glutamate stimulation. ZDHHC3/GODZ specifically palmitoylates Cys-611, which leads to Golgi retention and decreased cell surface expression. In contrast, Cys-837 palmitoylation does not affect cell surface expression but regulates stimulation-dependent endocytosis. In terms of processing, phosphorylated at Ser-862 by PRKCG; phosphorylation increases plasma membrane-associated GRI4 expression.

It is found in the cell membrane. It localises to the postsynaptic cell membrane. The protein resides in the cell projection. Its subcellular location is the dendrite. The catalysed reaction is Ca(2+)(in) = Ca(2+)(out). The enzyme catalyses Na(+)(in) = Na(+)(out). It carries out the reaction Mg(2+)(in) = Mg(2+)(out). Ionotropic glutamate receptor that functions as a ligand-gated cation channel, gated by L-glutamate and glutamatergic agonists such as alpha-amino-3-hydroxy-5-methyl-4-isoxazolepropionic acid (AMPA), quisqualic acid, and kainic acid. L-glutamate acts as an excitatory neurotransmitter at many synapses in the central nervous system and plays an important role in fast excitatory synaptic transmission. Binding of the excitatory neurotransmitter L-glutamate induces a conformation change, leading to the opening of the cation channel, and thereby converts the chemical signal to an electrical impulse upon entry of monovalent and divalent cations such as sodium and calcium. The receptor then desensitizes rapidly and enters a transient inactive state, characterized by the presence of bound agonist. In the presence of CACNG8, shows resensitization which is characterized by a delayed accumulation of current flux upon continued application of L-glutamate. The protein is Glutamate receptor 4 of Macaca fascicularis (Crab-eating macaque).